The following is a 508-amino-acid chain: MSADGLAAFLAEANEFRTIPIVRKFVADVIEPLGVFANLREEAVFLLESKDDESPWARYSFIGVAPFLTLESETGETFSVKDENGNEQITAPTLKEAFQWVERTLAVKPLAETVPFTGGAVGFLGYDFISAIEKVPRHKNRDVPMKTAYFVFCESLFAFDQKKRELLVIHYIRLSGNETEEEKIEAYRAAERRMADLAAKAARPQAEQPLLPAESESGRTASFAKAVSNYDKKQFLRDVEAVKRYIAAGDVFQAVLSQRFCVPVQAGGFAIYRLLRYINPSPYMFYFQLDGVEIVGSSPEKLIQVHRRRVEIDPIAGTRRRGRSPEEDERLADELYHDPKERAEHYMLVDLARNDIGRVAKYGTVEVPVLLQIGKFSHVMHLISKVVGELDDNVHPIDALLAAFPAGTVSGAPKVRAMQILQELEPTARGLYAGAIAYIGFDGNIDSCIAIRTAVVKDGYAYVQAGAGIVADSVPELEWKETRNKASALMNAIEQAERLFAKGERAVC.

L-tryptophan contacts are provided by residues Ser49 and Pro282–Met284. Position 317 to 318 (Gly317 to Thr318) interacts with chorismate. Glu344 is a Mg(2+) binding site. Chorismate contacts are provided by residues Tyr432, Arg452, Gly466–Gly468, and Gly468. Glu481 provides a ligand contact to Mg(2+).

Belongs to the anthranilate synthase component I family. As to quaternary structure, heterotetramer consisting of two non-identical subunits: a beta subunit (TrpG) and a large alpha subunit (TrpE). Mg(2+) serves as cofactor.

It catalyses the reaction chorismate + L-glutamine = anthranilate + pyruvate + L-glutamate + H(+). Its pathway is amino-acid biosynthesis; L-tryptophan biosynthesis; L-tryptophan from chorismate: step 1/5. Its activity is regulated as follows. Feedback inhibited by tryptophan. Its function is as follows. Part of a heterotetrameric complex that catalyzes the two-step biosynthesis of anthranilate, an intermediate in the biosynthesis of L-tryptophan. In the first step, the glutamine-binding beta subunit (TrpG) of anthranilate synthase (AS) provides the glutamine amidotransferase activity which generates ammonia as a substrate that, along with chorismate, is used in the second step, catalyzed by the large alpha subunit of AS (TrpE) to produce anthranilate. In the absence of TrpG, TrpE can synthesize anthranilate directly from chorismate and high concentrations of ammonia. The chain is Anthranilate synthase component 1 (trpE) from Bacillus caldotenax.